A 786-amino-acid chain; its full sequence is Endonuclease MutS2 (786 aa).

335–342 (GPNTGGKT) contributes to the ATP binding site. The Smr domain maps to 711–786 (LDLRGERFEN…GLGVTVVELK (76 aa)).

It belongs to the DNA mismatch repair MutS family. MutS2 subfamily. In terms of assembly, homodimer. Binds to stalled ribosomes, contacting rRNA.

In terms of biological role, endonuclease that is involved in the suppression of homologous recombination and thus may have a key role in the control of bacterial genetic diversity. Its function is as follows. Acts as a ribosome collision sensor, splitting the ribosome into its 2 subunits. Detects stalled/collided 70S ribosomes which it binds and splits by an ATP-hydrolysis driven conformational change. Acts upstream of the ribosome quality control system (RQC), a ribosome-associated complex that mediates the extraction of incompletely synthesized nascent chains from stalled ribosomes and their subsequent degradation. Probably generates substrates for RQC. The protein is Endonuclease MutS2 of Bacillus cereus (strain ATCC 10987 / NRS 248).